Consider the following 243-residue polypeptide: Leucyl/phenylalanyl-tRNA--protein transferase (243 aa).

The tract at residues 1–22 is disordered; it reads MHSQPYLLSPTPNTPFPPAEHA.

This sequence belongs to the L/F-transferase family.

It localises to the cytoplasm. The enzyme catalyses N-terminal L-lysyl-[protein] + L-leucyl-tRNA(Leu) = N-terminal L-leucyl-L-lysyl-[protein] + tRNA(Leu) + H(+). It carries out the reaction N-terminal L-arginyl-[protein] + L-leucyl-tRNA(Leu) = N-terminal L-leucyl-L-arginyl-[protein] + tRNA(Leu) + H(+). It catalyses the reaction L-phenylalanyl-tRNA(Phe) + an N-terminal L-alpha-aminoacyl-[protein] = an N-terminal L-phenylalanyl-L-alpha-aminoacyl-[protein] + tRNA(Phe). In terms of biological role, functions in the N-end rule pathway of protein degradation where it conjugates Leu, Phe and, less efficiently, Met from aminoacyl-tRNAs to the N-termini of proteins containing an N-terminal arginine or lysine. The protein is Leucyl/phenylalanyl-tRNA--protein transferase of Xylella fastidiosa (strain M23).